A 364-amino-acid chain; its full sequence is Cyclin-D3-2 (364 aa).

Residues 331 to 364 (PPGRPIKRGAAAATTADPLPADEESRDAWPPYAA) are disordered. A compositionally biased stretch (low complexity) spans 340-349 (AAAATTADPL).

It belongs to the cyclin family. Cyclin D subfamily.

The protein is Cyclin-D3-2 (CYCD3-2) of Oryza sativa subsp. japonica (Rice).